The primary structure comprises 345 residues: Skn-1 dependent zygotic transcript 15 protein (345 aa).

Residues 11 to 55 (AFGLHKLPHLVSDKVVKSMVPMELFTYSMVAEETKALVKRLFKKV) form the F-box domain.

May have a role in embryogenesis. The protein is Skn-1 dependent zygotic transcript 15 protein (sdz-15) of Caenorhabditis elegans.